Here is a 768-residue protein sequence, read N- to C-terminus: 5-methyltetrahydropteroyltriglutamate--homocysteine methyltransferase (768 aa).

5-methyltetrahydropteroyltri-L-glutamate is bound by residues 17 to 20 (RELK) and K117. L-homocysteine contacts are provided by residues 442–444 (IGS) and E495. Residues 442-444 (IGS) and E495 contribute to the L-methionine site. Residues 526-527 (RC) and W572 each bind 5-methyltetrahydropteroyltri-L-glutamate. D610 serves as a coordination point for L-homocysteine. Residue D610 coordinates L-methionine. A 5-methyltetrahydropteroyltri-L-glutamate-binding site is contributed by E616. Residues H653, C655, and E677 each contribute to the Zn(2+) site. The active-site Proton donor is H706. C738 is a Zn(2+) binding site.

This sequence belongs to the vitamin-B12 independent methionine synthase family. Zn(2+) serves as cofactor.

It carries out the reaction 5-methyltetrahydropteroyltri-L-glutamate + L-homocysteine = tetrahydropteroyltri-L-glutamate + L-methionine. It functions in the pathway amino-acid biosynthesis; L-methionine biosynthesis via de novo pathway; L-methionine from L-homocysteine (MetE route): step 1/1. In terms of biological role, catalyzes the transfer of a methyl group from 5-methyltetrahydrofolate to homocysteine resulting in methionine formation. The sequence is that of 5-methyltetrahydropteroyltriglutamate--homocysteine methyltransferase from Bifidobacterium adolescentis (strain ATCC 15703 / DSM 20083 / NCTC 11814 / E194a).